Here is a 547-residue protein sequence, read N- to C-terminus: Mercuric reductase (547 aa).

The region spanning 4–67 is the HMA domain; it reads NSYKIPIQGM…NISAAGYQPG (64 aa). 2 residues coordinate a metal cation: Cys-15 and Cys-18. Residues Ala-97, Gly-117, and Thr-122 each coordinate FAD. Residues Cys-123 and Cys-128 are joined by a disulfide bond. Residues Lys-132, Ala-196, Asp-388, and Val-396 each contribute to the FAD site. 2 residues coordinate Hg(2+): Cys-544 and Cys-545.

Belongs to the class-I pyridine nucleotide-disulfide oxidoreductase family. In terms of assembly, homodimer. FAD serves as cofactor.

It carries out the reaction Hg + NADP(+) + H(+) = Hg(2+) + NADPH. In terms of biological role, resistance to Hg(2+) in bacteria appears to be governed by a specialized system which includes mercuric reductase. MerA protein is responsible for volatilizing mercury as Hg(0). This is Mercuric reductase (merA) from Staphylococcus aureus.